The following is a 1956-amino-acid chain: Sodium channel protein type 10 subunit alpha (1956 aa).

Over M1–K125 the chain is Cytoplasmic. The segment at Q27–Q54 is disordered. The span at K40–Q54 shows a compositional bias: basic and acidic residues. An I repeat occupies F116–Q405. A helical transmembrane segment spans residues V126–R149. Topologically, residues T150–E154 are extracellular. Residues K155–A174 form a helical membrane-spanning segment. At R175–D187 the chain is on the cytoplasmic side. The chain crosses the membrane as a helical span at residues P188–I206. Topologically, residues D207 to S212 are extracellular. The chain crosses the membrane as a helical; Voltage-sensor span at residues G213–L232. Topologically, residues K233–D248 are cytoplasmic. The chain crosses the membrane as a helical span at residues V249 to L272. Topologically, residues K273–S341 are extracellular. The cysteines at positions 276 and 319 are disulfide-linked. N-linked (GlcNAc...) asparagine glycans are attached at residues N284, N288, N312, and N335. An intramembrane region (pore-forming) is located at residues F342–L366. The Extracellular segment spans residues R367–Y373. The chain crosses the membrane as a helical span at residues M374 to A399. Residues Y400–F659 lie on the Cytoplasmic side of the membrane. S441, S444, S467, and S479 each carry phosphoserine. Over residues H443–N454 the composition is skewed to polar residues. Disordered regions lie at residues H443 to R485 and S500 to G580. Positions D561–Q570 are enriched in basic and acidic residues. 2 positions are modified to phosphoserine: S612 and S615. One copy of the II repeat lies at C647–Q911. A helical transmembrane segment spans residues G660–M684. Over E685–A695 the chain is Extracellular. Residues M696–F719 form a helical membrane-spanning segment. Residues D720 to K727 lie on the Cytoplasmic side of the membrane. The chain crosses the membrane as a helical span at residues K728–A747. Topologically, residues K748–S753 are extracellular. A helical; Voltage-sensor transmembrane segment spans residues V754–L773. At N774 to N789 the chain is on the cytoplasmic side. The chain crosses the membrane as a helical span at residues L790–G810. At E811–D834 the chain is on the extracellular side. N819 is a glycosylation site (N-linked (GlcNAc...) asparagine). Residues F835–W855 constitute an intramembrane region (pore-forming). The Extracellular segment spans residues A856 to S864. The cysteines at positions 857 and 866 are disulfide-linked. The chain crosses the membrane as a helical span at residues I865 to L890. The Cytoplasmic segment spans residues N891–R1147. 2 disordered regions span residues A963–D986 and D1041–V1089. The stretch at Q1140 to L1449 is one III repeat. A helical membrane pass occupies residues I1148 to F1171. Residues E1172–A1184 are Extracellular-facing. Residues L1185 to F1210 traverse the membrane as a helical segment. Residues K1211–N1216 lie on the Cytoplasmic side of the membrane. Residues A1217–L1238 traverse the membrane as a helical segment. Topologically, residues E1239 to E1242 are extracellular. The chain crosses the membrane as a helical; Voltage-sensor span at residues V1243 to F1264. Topologically, residues E1265–N1283 are cytoplasmic. The helical transmembrane segment at V1284–I1311 threads the bilayer. Residues N1312, N1328, and N1336 are each glycosylated (N-linked (GlcNAc...) asparagine). Over N1312–V1353 the chain is Extracellular. An intramembrane region (pore-forming) is located at residues A1354 to A1375. Residues A1376 to N1391 are Extracellular-facing. The helical transmembrane segment at V1392–I1418 threads the bilayer. The Cytoplasmic segment spans residues D1419 to D1471. Residue S1451 is modified to Phosphoserine; by PKC. One copy of the IV repeat lies at I1458–Q1757. The chain crosses the membrane as a helical span at residues I1472–V1495. Topologically, residues E1496–K1506 are extracellular. The helical transmembrane segment at I1507–L1530 threads the bilayer. Residues R1531 to T1536 lie on the Cytoplasmic side of the membrane. A helical transmembrane segment spans residues N1537–L1560. At K1561 to F1572 the chain is on the extracellular side. Residues R1573 to R1594 traverse the membrane as a helical; Voltage-sensor segment. The Cytoplasmic segment spans residues T1595–N1609. Residues I1610 to V1632 form a helical membrane-spanning segment. Residues R1633 to T1646 lie on the Extracellular side of the membrane. The segment at residues F1647 to P1669 is an intramembrane region (pore-forming). The Extracellular segment spans residues I1670 to V1697. N-linked (GlcNAc...) asparagine glycosylation occurs at N1686. The chain crosses the membrane as a helical span at residues G1698–L1722. Residues E1723 to P1956 lie on the Cytoplasmic side of the membrane. The IQ domain maps to E1851 to P1880. The tract at residues S1909–P1956 is disordered.

Belongs to the sodium channel (TC 1.A.1.10) family. Nav1.8/SCN10A subfamily. The channel consists of an ion conducting pore forming alpha-subunit regulated by one or more associated auxiliary subunits SCN1B, SCN2B and SCN3B; electrophysiological properties may vary depending on the type of the associated beta subunits. Found in a number of complexes with PRX, DYNLT1 and PDZD2. Interacts with proteins such as FSTL1, PRX, DYNLT1, PDZD2, S100A10 and many others. Interacts with NEDD4 and NEDD4L. In terms of processing, ubiquitinated by NEDD4L; which promotes its endocytosis. Phosphorylation at Ser-1451 by PKC in a highly conserved cytoplasmic loop slows inactivation of the sodium channel and reduces peak sodium currents. Post-translationally, lacks the cysteine which covalently binds the conotoxin GVIIJ. This cysteine (position 816) is speculated in other sodium channel subunits alpha to be implied in covalent binding with the sodium channel subunit beta-2 or beta-4. As to expression, expressed in the dorsal root ganglia and sciatic nerve.

The protein resides in the cell membrane. The enzyme catalyses Na(+)(in) = Na(+)(out). Functionally, tetrodotoxin-resistant channel that mediates the voltage-dependent sodium ion permeability of excitable membranes. Assuming opened or closed conformations in response to the voltage difference across the membrane, the protein forms a sodium-selective channel through which sodium ions may pass in accordance with their electrochemical gradient. Plays a role in neuropathic pain mechanisms. The sequence is that of Sodium channel protein type 10 subunit alpha from Homo sapiens (Human).